The sequence spans 273 residues: DNA repair protein RecO (273 aa).

The tract at residues 249 to 273 (GRSLTEEPELKAEQTEAEKESQRPR) is disordered. Residues 252-273 (LTEEPELKAEQTEAEKESQRPR) show a composition bias toward basic and acidic residues.

The protein belongs to the RecO family.

Involved in DNA repair and RecF pathway recombination. The protein is DNA repair protein RecO of Heliobacterium modesticaldum (strain ATCC 51547 / Ice1).